Consider the following 31-residue polypeptide: Large ribosomal subunit protein bL21 (31 aa).

The protein belongs to the bacterial ribosomal protein bL21 family. In terms of assembly, part of the 50S ribosomal subunit. Contacts protein L20.

This protein binds to 23S rRNA in the presence of protein L20. The sequence is that of Large ribosomal subunit protein bL21 (rplU) from Streptococcus thermophilus.